The sequence spans 705 residues: DNA ligase (705 aa).

NAD(+)-binding positions include Asp-42–Asp-46, Ser-91–Leu-92, and Glu-125. Lys-127 acts as the N6-AMP-lysine intermediate in catalysis. NAD(+) contacts are provided by Arg-148, Glu-183, Lys-299, and Lys-323. Cys-428, Cys-431, Cys-446, and Cys-452 together coordinate Zn(2+). The BRCT domain maps to Thr-626–Leu-705.

It belongs to the NAD-dependent DNA ligase family. LigA subfamily. Mg(2+) is required as a cofactor. Mn(2+) serves as cofactor.

The enzyme catalyses NAD(+) + (deoxyribonucleotide)n-3'-hydroxyl + 5'-phospho-(deoxyribonucleotide)m = (deoxyribonucleotide)n+m + AMP + beta-nicotinamide D-nucleotide.. Functionally, DNA ligase that catalyzes the formation of phosphodiester linkages between 5'-phosphoryl and 3'-hydroxyl groups in double-stranded DNA using NAD as a coenzyme and as the energy source for the reaction. It is essential for DNA replication and repair of damaged DNA. The polypeptide is DNA ligase (Roseobacter denitrificans (strain ATCC 33942 / OCh 114) (Erythrobacter sp. (strain OCh 114))).